Here is an 86-residue protein sequence, read N- to C-terminus: Defensin-like protein 259 (86 aa).

Residues methionine 1–alanine 25 form the signal peptide. Disulfide bonds link cysteine 60–cysteine 76, cysteine 66–cysteine 83, and cysteine 70–cysteine 85.

It belongs to the DEFL family.

The protein localises to the secreted. This Arabidopsis thaliana (Mouse-ear cress) protein is Defensin-like protein 259.